The following is a 702-amino-acid chain: Arginine decarboxylase 1 (702 aa).

The residue at position 151 (Lys151) is an N6-(pyridoxal phosphate)lysine. A substrate-binding site is contributed by 336–346; that stretch reads IDVGGGLGIDY. The span at 668 to 686 shows a compositional bias: low complexity; sequence ASGESSGMSSDSEGSAAGA. Positions 668 to 702 are disordered; that stretch reads ASGESSGMSSDSEGSAAGAAEEDDDEWEFMRGLTV.

Belongs to the Orn/Lys/Arg decarboxylase class-II family. SpeA subfamily. Pyridoxal 5'-phosphate serves as cofactor. Mg(2+) is required as a cofactor. As to expression, expressed in roots, leaves and stems (at protein level).

It carries out the reaction L-arginine + H(+) = agmatine + CO2. It participates in amine and polyamine biosynthesis; agmatine biosynthesis; agmatine from L-arginine: step 1/1. This chain is Arginine decarboxylase 1 (ADC1), found in Oryza sativa subsp. japonica (Rice).